The primary structure comprises 902 residues: Phosphoenolpyruvate carboxylase (902 aa).

The active site involves His-132. A disordered region spans residues 327–346 (DALERPEKTAGKKSSKRTPY). Lys-561 is a catalytic residue.

It belongs to the PEPCase type 1 family. The cofactor is Mg(2+).

It catalyses the reaction oxaloacetate + phosphate = phosphoenolpyruvate + hydrogencarbonate. Its function is as follows. Forms oxaloacetate, a four-carbon dicarboxylic acid source for the tricarboxylic acid cycle. The chain is Phosphoenolpyruvate carboxylase from Corynebacterium diphtheriae (strain ATCC 700971 / NCTC 13129 / Biotype gravis).